A 299-amino-acid polypeptide reads, in one-letter code: Diaminopimelate epimerase (299 aa).

Substrate-binding residues include N15, Q47, and N67. C76 serves as the catalytic Proton donor. Substrate contacts are provided by residues 77–78 (GN), N163, N197, and 215–216 (ER). C224 serves as the catalytic Proton acceptor. 225 to 226 (GS) provides a ligand contact to substrate.

Belongs to the diaminopimelate epimerase family. Homodimer.

The protein localises to the cytoplasm. The catalysed reaction is (2S,6S)-2,6-diaminopimelate = meso-2,6-diaminopimelate. It functions in the pathway amino-acid biosynthesis; L-lysine biosynthesis via DAP pathway; DL-2,6-diaminopimelate from LL-2,6-diaminopimelate: step 1/1. Catalyzes the stereoinversion of LL-2,6-diaminopimelate (L,L-DAP) to meso-diaminopimelate (meso-DAP), a precursor of L-lysine and an essential component of the bacterial peptidoglycan. The chain is Diaminopimelate epimerase from Agrobacterium fabrum (strain C58 / ATCC 33970) (Agrobacterium tumefaciens (strain C58)).